The sequence spans 160 residues: Troponin C, skeletal muscle (160 aa).

Threonine 2 carries the post-translational modification N-acetylthreonine. EF-hand domains lie at 15-50 (EMIA…LGQT), 51-86 (PTKE…QMKE), 91-126 (KSEE…SGEH), and 127-160 (VTDE…EGVQ). Residues aspartate 28, aspartate 30, aspartate 34, glutamate 39, aspartate 64, aspartate 66, serine 68, threonine 70, glutamate 75, aspartate 104, asparagine 106, aspartate 108, tyrosine 110, glutamate 115, aspartate 140, asparagine 142, aspartate 144, arginine 146, and glutamate 151 each contribute to the Ca(2+) site.

Belongs to the troponin C family.

Functionally, troponin is the central regulatory protein of striated muscle contraction. Tn consists of three components: Tn-I which is the inhibitor of actomyosin ATPase, Tn-T which contains the binding site for tropomyosin and Tn-C. The binding of calcium to Tn-C abolishes the inhibitory action of Tn on actin filaments. The polypeptide is Troponin C, skeletal muscle (TNNC2) (Homo sapiens (Human)).